The sequence spans 1938 residues: Myosin-6 (1938 aa).

Positions 31 to 80 (DIRTECFVPDDKEEYVKAKIVSREGGKVTAETENGKTVTVKEDQVMQQNP) constitute a Myosin N-terminal SH3-like domain. A Myosin motor domain is found at 84–779 (DKIEDMAMLT…LLGLLEEMRD (696 aa)). N6,N6,N6-trimethyllysine is present on K128. 177 to 184 (GESGAGKT) contacts ATP. T378 carries the phosphothreonine modification. The residue at position 416 (S416) is a Phosphoserine. Actin-binding stretches follow at residues 656-678 (LNKLMTNLRTTHPHFVRCIIPNE) and 758-772 (KFGHTKVFFKAGLLG). One can recognise an IQ domain in the interval 782–811 (LSRIITRIQAQARGQLMRIEFKKMVERRDA). Calmodulin-binding stretches follow at residues 789–806 (IQAQARGQLMRIEFKKMV) and 815–832 (IQWNIRAFMGVKNWPWMK). A coiled-coil region spans residues 842–1938 (KSAETEKEMA…GAKQKMHDEE (1097 aa)). Phosphoserine is present on residues S1089 and S1138. Y1260 is modified (phosphotyrosine). S1270 is modified (phosphoserine). Phosphothreonine is present on residues T1276 and T1283. A Phosphoserine modification is found at S1308. At Y1309 the chain carries Phosphotyrosine. Residue T1310 is modified to Phosphothreonine. Position 1511 is a phosphoserine (S1511). Phosphothreonine occurs at positions 1514 and 1680. The tract at residues 1907–1938 (AEERADIAESQVNKLRAKSRDIGAKQKMHDEE) is disordered. Residues 1924-1938 (KSRDIGAKQKMHDEE) are compositionally biased toward basic and acidic residues.

This sequence belongs to the TRAFAC class myosin-kinesin ATPase superfamily. Myosin family. Muscle myosin is a hexameric protein that consists of 2 heavy chain subunits (MHC), 2 alkali light chain subunits (MLC) and 2 regulatory light chain subunits (MLC-2).

The protein localises to the cytoplasm. Its subcellular location is the myofibril. Muscle contraction. The sequence is that of Myosin-6 (Myh6) from Rattus norvegicus (Rat).